The sequence spans 582 residues: Semenogelin-2 (582 aa).

The first 23 residues, 1–23 (MKSIILFVLSLLLILEKQAAVMG), serve as a signal peptide directing secretion. Disordered regions lie at residues 26–65 (CGSK…SFSI), 132–159 (GGQA…SSQY), 272–295 (NLNQ…RTEE), 318–358 (TEEK…ERHL), 379–417 (EEQI…EERR), and 439–582 (EEQI…PVST). Composition is skewed to polar residues over residues 31–40 (QLPSGSSQFP) and 137–159 (RGTQ…SSQY). Polar residues predominate over residues 325–335 (KSQNQVTIHSQ). The span at 336 to 345 (GQEHGHKENK) shows a compositional bias: basic and acidic residues. Polar residues-rich tracts occupy residues 379–397 (EEQI…SQAQ), 439–457 (EEQI…SQAQ), 487–496 (KDVSQSSTSF), and 506–524 (SQIQ…QNAK). 2 stretches are compositionally biased toward basic and acidic residues: residues 525–552 (GKSD…ESSE) and 559–582 (TEHE…PVST).

It belongs to the semenogelin family. As to quaternary structure, interacts with SERPINA5.

Its subcellular location is the secreted. In terms of biological role, participates in the formation of a gel matrix (sperm coagulum) entrapping the accessory gland secretions and ejaculated spermatozoa. In Hylobates lar (Lar gibbon), this protein is Semenogelin-2 (SEMG2).